The sequence spans 330 residues: Aspartate--ammonia ligase (330 aa).

It belongs to the class-II aminoacyl-tRNA synthetase family. AsnA subfamily.

The protein resides in the cytoplasm. It carries out the reaction L-aspartate + NH4(+) + ATP = L-asparagine + AMP + diphosphate + H(+). It participates in amino-acid biosynthesis; L-asparagine biosynthesis; L-asparagine from L-aspartate (ammonia route): step 1/1. The sequence is that of Aspartate--ammonia ligase from Salmonella agona (strain SL483).